Here is a 63-residue protein sequence, read N- to C-terminus: Large ribosomal subunit protein eL37 (63 aa).

4 residues coordinate Zn(2+): Cys20, Cys23, Cys35, and Cys38. A C4-type zinc finger spans residues 20-38 (CRRCGRRAFNVKKGYCAAC).

Belongs to the eukaryotic ribosomal protein eL37 family. Requires Zn(2+) as cofactor.

Binds to the 23S rRNA. In Thermococcus gammatolerans (strain DSM 15229 / JCM 11827 / EJ3), this protein is Large ribosomal subunit protein eL37.